We begin with the raw amino-acid sequence, 609 residues long: Sulfite reductase [NADPH] flavoprotein alpha-component (609 aa).

Residues 72 to 210 (ITLISASQTG…LAAQWRRQLV (139 aa)) form the Flavodoxin-like domain. FMN-binding positions include 78–83 (SQTGNA) and 125–128 (STQG). Positions 244 to 458 (SSPLQATFAV…IEHNDNFRLP (215 aa)) constitute an FAD-binding FR-type domain. Residues T332, Q366, 396 to 399 (RLYS), 414 to 416 (TVG), Y420, and 429 to 432 (GGAS) each bind FAD. NADP(+) contacts are provided by residues 529–530 (SR), 535–539 (KIYVQ), and D571. Y609 is an FAD binding site.

Belongs to the NADPH-dependent sulphite reductase flavoprotein subunit CysJ family. This sequence in the N-terminal section; belongs to the flavodoxin family. The protein in the C-terminal section; belongs to the flavoprotein pyridine nucleotide cytochrome reductase family. In terms of assembly, alpha(8)-beta(8). The alpha component is a flavoprotein, the beta component is a hemoprotein. Requires FAD as cofactor. FMN serves as cofactor.

It carries out the reaction hydrogen sulfide + 3 NADP(+) + 3 H2O = sulfite + 3 NADPH + 4 H(+). The protein operates within sulfur metabolism; hydrogen sulfide biosynthesis; hydrogen sulfide from sulfite (NADPH route): step 1/1. Functionally, component of the sulfite reductase complex that catalyzes the 6-electron reduction of sulfite to sulfide. This is one of several activities required for the biosynthesis of L-cysteine from sulfate. The flavoprotein component catalyzes the electron flow from NADPH -&gt; FAD -&gt; FMN to the hemoprotein component. In Pectobacterium atrosepticum (strain SCRI 1043 / ATCC BAA-672) (Erwinia carotovora subsp. atroseptica), this protein is Sulfite reductase [NADPH] flavoprotein alpha-component.